Consider the following 326-residue polypeptide: tRNA-dihydrouridine(20a/20b) synthase [NAD(P)+] (326 aa).

Residues 26–28 (PMV) and Gln-79 contribute to the FMN site. The active-site Proton donor is Cys-108. FMN-binding positions include Lys-149, His-177, 208–210 (NGD), and 232–233 (AR).

It belongs to the Dus family. Dus4 subfamily. The cofactor is FMN.

The protein localises to the mitochondrion. It carries out the reaction 5,6-dihydrouridine(20a) in tRNA + NADP(+) = uridine(20a) in tRNA + NADPH + H(+). The catalysed reaction is 5,6-dihydrouridine(20a) in tRNA + NAD(+) = uridine(20a) in tRNA + NADH + H(+). The enzyme catalyses 5,6-dihydrouridine(20b) in tRNA + NAD(+) = uridine(20b) in tRNA + NADH + H(+). It catalyses the reaction 5,6-dihydrouridine(20b) in tRNA + NADP(+) = uridine(20b) in tRNA + NADPH + H(+). It carries out the reaction a 5,6-dihydrouridine in mRNA + NAD(+) = a uridine in mRNA + NADH + H(+). The catalysed reaction is a 5,6-dihydrouridine in mRNA + NADP(+) = a uridine in mRNA + NADPH + H(+). Catalyzes the synthesis of dihydrouridine, a modified base found in the D-loop of most tRNAs. Also able to mediate dihydrouridylation of some mRNAs, thereby affecting their translation. The chain is tRNA-dihydrouridine(20a/20b) synthase [NAD(P)+] from Schizosaccharomyces pombe (strain 972 / ATCC 24843) (Fission yeast).